The primary structure comprises 261 residues: Small ribosomal subunit protein uS2 (261 aa).

N-acetylserine is present on serine 2. The segment at 215-261 (AEEAKTTEDVEEAAPVDADEWTGETEEVDWAESGATPAVEDAAASNW) is disordered. Residues 223 to 244 (DVEEAAPVDADEWTGETEEVDW) show a composition bias toward acidic residues.

The protein belongs to the universal ribosomal protein uS2 family. Component of the small ribosomal subunit. Mature ribosomes consist of a small (40S) and a large (60S) subunit. The 40S subunit contains about 33 different proteins and 1 molecule of RNA (18S). The 60S subunit contains about 49 different proteins and 3 molecules of RNA (25S, 5.8S and 5S). Interacts with RPS21.

The protein resides in the cytoplasm. Functionally, required for the assembly and/or stability of the 40S ribosomal subunit. Required for the processing of the 20S rRNA-precursor to mature 18S rRNA in a late step of the maturation of 40S ribosomal subunits. The chain is Small ribosomal subunit protein uS2 from Scheffersomyces stipitis (strain ATCC 58785 / CBS 6054 / NBRC 10063 / NRRL Y-11545) (Yeast).